The primary structure comprises 398 residues: Serine/threonine-protein phosphatase 4 regulatory subunit 2-B (398 aa).

The segment at S138–D398 is disordered. Polar residues-rich tracts occupy residues S139 to R149, P156 to G170, and T183 to L193. The segment covering M197–L211 has biased composition (basic and acidic residues). A compositionally biased stretch (polar residues) spans A278 to T294. The segment covering S338 to G366 has biased composition (low complexity).

It belongs to the PPP4R2 family. Serine/threonine-protein phosphatase 4 (PP4) occurs in different assemblies of the catalytic and one or more regulatory subunits.

Its function is as follows. Regulatory subunit of serine/threonine-protein phosphatase 4 (PP4). The chain is Serine/threonine-protein phosphatase 4 regulatory subunit 2-B (ppp4r2-b) from Xenopus laevis (African clawed frog).